The primary structure comprises 630 residues: tRNA uridine 5-carboxymethylaminomethyl modification enzyme MnmG (630 aa).

Position 15-20 (15-20 (GAGHAG)) interacts with FAD. 274-288 (GPRYCPSIEDKIVRF) contributes to the NAD(+) binding site.

This sequence belongs to the MnmG family. As to quaternary structure, homodimer. Heterotetramer of two MnmE and two MnmG subunits. FAD is required as a cofactor.

The protein localises to the cytoplasm. In terms of biological role, NAD-binding protein involved in the addition of a carboxymethylaminomethyl (cmnm) group at the wobble position (U34) of certain tRNAs, forming tRNA-cmnm(5)s(2)U34. In Alkaliphilus oremlandii (strain OhILAs) (Clostridium oremlandii (strain OhILAs)), this protein is tRNA uridine 5-carboxymethylaminomethyl modification enzyme MnmG.